The primary structure comprises 389 residues: GDP-fucose protein O-fucosyltransferase 1 (389 aa).

Positions 1 to 21 are cleaved as a signal peptide; it reads MRVSKVLTLASFISVCSYSEA. N24 carries an N-linked (GlcNAc...) asparagine glycan. Residues C35 and C37 are joined by a disulfide bond. A substrate-binding site is contributed by 40-43; sequence RFGN. C119 and C135 form a disulfide bridge. 238-240 contributes to the substrate binding site; that stretch reads HLR. 2 disulfide bridges follow: C249–C281 and C266–C353. Position 356–357 (356–357) interacts with substrate; sequence TF.

It belongs to the glycosyltransferase 65 family. In terms of assembly, monomer.

Its subcellular location is the endoplasmic reticulum. The catalysed reaction is L-seryl-[protein] + GDP-beta-L-fucose = 3-O-(alpha-L-fucosyl)-L-seryl-[protein] + GDP + H(+). It catalyses the reaction L-threonyl-[protein] + GDP-beta-L-fucose = 3-O-(alpha-L-fucosyl)-L-threonyl-[protein] + GDP + H(+). The protein operates within protein modification; protein glycosylation. In terms of biological role, catalyzes the reaction that attaches fucose through an O-glycosidic linkage to a conserved serine or threonine residue found in the consensus sequence C2-X(4,5)-[S/T]-C3 of EGF domains, where C2 and C3 are the second and third conserved cysteines. Specifically uses GDP-fucose as donor substrate and proper disulfide pairing of the substrate EGF domains is required for fucose transfer. This is GDP-fucose protein O-fucosyltransferase 1 from Caenorhabditis elegans.